Reading from the N-terminus, the 503-residue chain is Cytosolic carboxypeptidase 6 (503 aa).

The Peptidase M14 domain maps to Tyr-167–Tyr-438. Zn(2+)-binding residues include His-230, Glu-233, and His-328. Glu-401 functions as the Proton donor/acceptor in the catalytic mechanism. Composition is skewed to basic and acidic residues over residues Ile-459–Pro-469 and Lys-487–Phe-503. Positions Ile-459–Phe-503 are disordered.

It belongs to the peptidase M14 family. In terms of assembly, interacts with MYLK. Zn(2+) serves as cofactor.

Its subcellular location is the cytoplasm. It localises to the cytosol. The protein localises to the cytoskeleton. It is found in the microtubule organizing center. The protein resides in the centrosome. Its subcellular location is the centriole. It localises to the golgi apparatus. The protein localises to the cilium basal body. It carries out the reaction (L-glutamyl)(n+1)-gamma-L-glutamyl-L-glutamyl-[protein] + H2O = (L-glutamyl)(n)-gamma-L-glutamyl-L-glutamyl-[protein] + L-glutamate. The catalysed reaction is C-terminal L-alpha-aminoacyl-L-glutamyl-L-glutamyl-[tubulin] + H2O = C-terminal L-alpha-aminoacyl-L-glutamyl-[tubulin] + L-glutamate. Functionally, metallocarboxypeptidase that mediates protein deglutamylation of tubulin and non-tubulin target proteins. Catalyzes the removal of polyglutamate side chains present on the gamma-carboxyl group of glutamate residues within the C-terminal tail of tubulin protein. Specifically cleaves tubulin long-side-chains, while it is not able to remove the branching point glutamate. Also catalyzes the removal of polyglutamate residues from the carboxy-terminus of non-tubulin proteins such as MYLK. Mediates the deglutamylation of nucleotidyltransferase CGAS, leading to CGAS antiviral defense response activation. Involved in KLF4 deglutamylation which promotes KLF4 proteasome-mediated degradation, thereby negatively regulating cell pluripotency maintenance and embryogenesis. This is Cytosolic carboxypeptidase 6 from Homo sapiens (Human).